The chain runs to 613 residues: Isocitrate dehydrogenase kinase/phosphatase (613 aa).

ATP-binding positions include 328–334 (APGIRGL) and Lys-349. Asp-384 is an active-site residue.

Belongs to the AceK family.

It localises to the cytoplasm. It catalyses the reaction L-seryl-[isocitrate dehydrogenase] + ATP = O-phospho-L-seryl-[isocitrate dehydrogenase] + ADP + H(+). Functionally, bifunctional enzyme which can phosphorylate or dephosphorylate isocitrate dehydrogenase (IDH) on a specific serine residue. This is a regulatory mechanism which enables bacteria to bypass the Krebs cycle via the glyoxylate shunt in response to the source of carbon. When bacteria are grown on glucose, IDH is fully active and unphosphorylated, but when grown on acetate or ethanol, the activity of IDH declines drastically concomitant with its phosphorylation. This is Isocitrate dehydrogenase kinase/phosphatase from Cupriavidus necator (strain ATCC 17699 / DSM 428 / KCTC 22496 / NCIMB 10442 / H16 / Stanier 337) (Ralstonia eutropha).